The sequence spans 296 residues: Cadherin-4 (296 aa).

3 consecutive Cadherin domains span residues 1-101 (NVPE…RPEF), 102-216 (INQV…PPEF), and 217-296 (TTST…MLTI). At 1–296 (NVPENSRGPF…ELNRAFMLTI (296 aa)) the chain is on the extracellular side. N-linked (GlcNAc...) asparagine glycosylation is found at Asn107 and Asn236.

Its subcellular location is the cell membrane. In terms of biological role, cadherins are calcium-dependent cell adhesion proteins. They preferentially interact with themselves in a homophilic manner in connecting cells; cadherins may thus contribute to the sorting of heterogeneous cell types. May play an important role in retinal development. This is Cadherin-4 (Cdh4) from Rattus norvegicus (Rat).